Here is a 226-residue protein sequence, read N- to C-terminus: Cell division protein SepF (226 aa).

A disordered region spans residues 20–116 (RAYDDAGYDK…ESLTYHTRDN (97 aa)). Basic and acidic residues predominate over residues 22-44 (YDDAGYDKGGYRESRYRSSRYSE). Over residues 45 to 56 (DFGDEDDEDEEA) the composition is skewed to acidic residues. A compositionally biased stretch (basic and acidic residues) spans 62–95 (RRGDRSRLERAAARSGDVDHNVEGEQPERVERAS). Residues 97–111 (RSITRSAEPSESLTY) show a composition bias toward polar residues.

This sequence belongs to the SepF family. Homodimer. Interacts with FtsZ.

It localises to the cytoplasm. In terms of biological role, cell division protein that is part of the divisome complex and is recruited early to the Z-ring. Probably stimulates Z-ring formation, perhaps through the cross-linking of FtsZ protofilaments. Its function overlaps with FtsA. In Salinispora arenicola (strain CNS-205), this protein is Cell division protein SepF.